Here is a 910-residue protein sequence, read N- to C-terminus: Leucine--tRNA ligase (910 aa).

A 'HIGH' region motif is present at residues 42 to 52 (PYPSGKLHMGH). Positions 668–672 (KMSKS) match the 'KMSKS' region motif. Lysine 671 provides a ligand contact to ATP.

The protein belongs to the class-I aminoacyl-tRNA synthetase family.

It is found in the cytoplasm. It carries out the reaction tRNA(Leu) + L-leucine + ATP = L-leucyl-tRNA(Leu) + AMP + diphosphate. This chain is Leucine--tRNA ligase, found in Neisseria meningitidis serogroup A / serotype 4A (strain DSM 15465 / Z2491).